The primary structure comprises 315 residues: Ribose-phosphate pyrophosphokinase (315 aa).

ATP is bound by residues 37–39 (DSE) and 96–97 (RQ). Mg(2+) contacts are provided by His131 and Asp170. Residue Lys194 is part of the active site. D-ribose 5-phosphate is bound by residues Arg196, Asp220, and 224-228 (DTGGT).

The protein belongs to the ribose-phosphate pyrophosphokinase family. Class I subfamily. Homohexamer. Requires Mg(2+) as cofactor.

It localises to the cytoplasm. The enzyme catalyses D-ribose 5-phosphate + ATP = 5-phospho-alpha-D-ribose 1-diphosphate + AMP + H(+). It functions in the pathway metabolic intermediate biosynthesis; 5-phospho-alpha-D-ribose 1-diphosphate biosynthesis; 5-phospho-alpha-D-ribose 1-diphosphate from D-ribose 5-phosphate (route I): step 1/1. In terms of biological role, involved in the biosynthesis of the central metabolite phospho-alpha-D-ribosyl-1-pyrophosphate (PRPP) via the transfer of pyrophosphoryl group from ATP to 1-hydroxyl of ribose-5-phosphate (Rib-5-P). The polypeptide is Ribose-phosphate pyrophosphokinase (Marinomonas sp. (strain MWYL1)).